Here is a 201-residue protein sequence, read N- to C-terminus: Large ribosomal subunit protein uL4 (201 aa).

Residues 43 to 73 (TRAQKTRSEVSGGGAKPWRQKGTGRARAGTT) are disordered.

This sequence belongs to the universal ribosomal protein uL4 family. As to quaternary structure, part of the 50S ribosomal subunit.

Functionally, one of the primary rRNA binding proteins, this protein initially binds near the 5'-end of the 23S rRNA. It is important during the early stages of 50S assembly. It makes multiple contacts with different domains of the 23S rRNA in the assembled 50S subunit and ribosome. Its function is as follows. Forms part of the polypeptide exit tunnel. The polypeptide is Large ribosomal subunit protein uL4 (Colwellia psychrerythraea (strain 34H / ATCC BAA-681) (Vibrio psychroerythus)).